Consider the following 432-residue polypeptide: Serine hydroxymethyltransferase 1 (432 aa).

(6S)-5,6,7,8-tetrahydrofolate is bound by residues L131 and G135 to L137. K240 carries the post-translational modification N6-(pyridoxal phosphate)lysine.

The protein belongs to the SHMT family. Homodimer. Pyridoxal 5'-phosphate is required as a cofactor.

It localises to the cytoplasm. The catalysed reaction is (6R)-5,10-methylene-5,6,7,8-tetrahydrofolate + glycine + H2O = (6S)-5,6,7,8-tetrahydrofolate + L-serine. The protein operates within one-carbon metabolism; tetrahydrofolate interconversion. Its pathway is amino-acid biosynthesis; glycine biosynthesis; glycine from L-serine: step 1/1. Its function is as follows. Catalyzes the reversible interconversion of serine and glycine with tetrahydrofolate (THF) serving as the one-carbon carrier. This reaction serves as the major source of one-carbon groups required for the biosynthesis of purines, thymidylate, methionine, and other important biomolecules. Also exhibits THF-independent aldolase activity toward beta-hydroxyamino acids, producing glycine and aldehydes, via a retro-aldol mechanism. This Rhodopseudomonas palustris (strain ATCC BAA-98 / CGA009) protein is Serine hydroxymethyltransferase 1.